The primary structure comprises 31 residues: Cyclotide cter-D (31 aa).

Positions 1–31 (GIPCAESCVWIPCTVTALLGCSCKDKVCYLN) form a cross-link, cyclopeptide (Gly-Asn). Cystine bridges form between Cys4–Cys21, Cys8–Cys23, and Cys13–Cys28.

In terms of processing, contains 3 disulfide bonds. Post-translationally, this is a cyclic peptide. Expressed in root, seed and nodule but not in flower, stem, shoot, leaf and pod.

Its function is as follows. Probably participates in a plant defense mechanism. The polypeptide is Cyclotide cter-D (Clitoria ternatea (Butterfly pea)).